A 299-amino-acid chain; its full sequence is Non-structural protein NS-S (299 aa).

Positions 66-69 (PNNP) are involved in inclusion bodies formation. The segment at 148–220 (FEGDMVIDSC…KPLLDSLYFA (73 aa)) is interaction with host TNIP2.

The protein belongs to the Bandavirus NS-S protein family. Interacts with host TBK1; this interaction antagonizes TBK1 phosphorylation and inhibits TBK1-IRF3 interaction. Interacts with host STAT2; this interaction blocks the nuclear translocation and activation of host STAT2. Interacts with host TNIP2.

It is found in the host cytoplasm. Functionally, plays a role in the inhibition of host RLR-induced interferon-beta activation by inhibiting the phosphorylation of TANK-binding kinase 1/TBK1, thereby blocking IRF3 activation and preventing the establishment of an antiviral state. Also blocks IFN-triggered nuclear translocation and activation of host STAT2. This is Non-structural protein NS-S (NSS) from Alces americanus (American moose).